Consider the following 457-residue polypeptide: Argininosuccinate lyase (457 aa).

This sequence belongs to the lyase 1 family. Argininosuccinate lyase subfamily.

It localises to the cytoplasm. It carries out the reaction 2-(N(omega)-L-arginino)succinate = fumarate + L-arginine. Its pathway is amino-acid biosynthesis; L-arginine biosynthesis; L-arginine from L-ornithine and carbamoyl phosphate: step 3/3. This chain is Argininosuccinate lyase, found in Haemophilus influenzae (strain ATCC 51907 / DSM 11121 / KW20 / Rd).